A 148-amino-acid polypeptide reads, in one-letter code: Arginine repressor (148 aa).

It belongs to the ArgR family.

It is found in the cytoplasm. It functions in the pathway amino-acid biosynthesis; L-arginine biosynthesis [regulation]. Its function is as follows. Regulates arginine biosynthesis genes. This Chlorobium phaeobacteroides (strain BS1) protein is Arginine repressor.